Consider the following 1499-residue polypeptide: Collagen alpha-2(V) chain (1499 aa).

Residues 1 to 26 (MMANWAEARPLLILIVLLGQFVSIKA) form the signal peptide. Positions 39-97 (IACTQNGQMYLNRDIWKPAPCQICVCDNGAILCDKIECQDVLDCADPVTPPGECCPVCS) constitute a VWFC domain. Positions 104-1268 (NTNFGRGRKG…DDKNKTDPGV (1165 aa)) are disordered. Residues 170–182 (PGAPGPPGHPSHP) are compositionally biased toward pro residues. A compositionally biased stretch (low complexity) spans 212 to 227 (PGSVGPVGPRGPQGLQ). Residues 236–248 (TGPPGEPGDPGPM) show a composition bias toward pro residues. Hydroxyproline occurs at positions 290, 293, and 296. Composition is skewed to low complexity over residues 322–340 (EAGPTGPMGAMGPLGPRGM) and 427–443 (TPGAKGPTGSPGTSGPP). The Cell attachment site signature appears at 506-508 (RGD). Composition is skewed to low complexity over residues 604–626 (SIGIRGQPGSMGLPGPKGSSGDP) and 694–709 (DQGVPGDPGAVGPLGP). P611 and P617 each carry hydroxyproline. Positions 710–721 (RGERGNPGERGE) are enriched in basic and acidic residues. The span at 732–741 (GMAGGHGPDG) shows a compositional bias: gly residues. The segment covering 742-758 (PKGSPGPSGTPGDTGPP) has biased composition (low complexity). Residues 776 to 787 (KGDRGGIGEKGA) are compositionally biased toward basic and acidic residues. Low complexity predominate over residues 826 to 841 (PPGSRGNPGSRGENGP). Positions 894–903 (GLKGGRGTQG) are enriched in gly residues. P919 bears the 3-hydroxyproline; partial mark. A compositionally biased stretch (pro residues) spans 919–929 (PPGPAGAPGPA). Short sequence motifs (cell attachment site) lie at residues 944–946 (RGD), 1067–1069 (RGD), 1070–1072 (RGD), 1100–1102 (RGD), 1127–1129 (RGD), and 1136–1138 (RGD). The segment covering 1063-1072 (AVGERGDRGD) has biased composition (basic and acidic residues). The span at 1093-1114 (APGDAGQRGDPGSRGPIGPPGR) shows a compositional bias: low complexity. The span at 1127-1141 (RGDKGDHGDRGDRGQ) shows a compositional bias: basic and acidic residues. A 3-hydroxyproline; partial modification is found at P1156. Composition is skewed to pro residues over residues 1171-1181 (PFGPRGPPGPV) and 1211-1226 (EGPPGEPGPPGPPGPP). The propeptide at 1230-1499 (TAALGDIMGH…GVEIGPVCFV (270 aa)) is C-terminal propeptide. N-linked (GlcNAc...) asparagine glycosylation is present at N1262. One can recognise a Fibrillar collagen NC1 domain in the interval 1266 to 1499 (PGVHATLKSL…GVEIGPVCFV (234 aa)). Cystine bridges form between C1296–C1328, C1336–C1497, and C1405–C1450. 4 residues coordinate Ca(2+): D1314, N1316, Q1317, and D1322. N-linked (GlcNAc...) asparagine glycosylation is present at N1400.

This sequence belongs to the fibrillar collagen family. Trimers of two alpha 1(V) and one alpha 2(V) chains in most tissues and trimers of one alpha 1(V), one alpha 2(V), and one alpha 3(V) chains in placenta. Post-translationally, prolines at the third position of the tripeptide repeating unit (G-X-P) are hydroxylated in some or all of the chains. Probably 3-hydroxylated on Pro-919 and Pro-1156 by LEPREL1.

The protein localises to the secreted. It is found in the extracellular space. It localises to the extracellular matrix. In terms of biological role, type V collagen is a member of group I collagen (fibrillar forming collagen). It is a minor connective tissue component of nearly ubiquitous distribution. Type V collagen binds to DNA, heparan sulfate, thrombospondin, heparin, and insulin. Type V collagen is a key determinant in the assembly of tissue-specific matrices. This chain is Collagen alpha-2(V) chain (COL5A2), found in Homo sapiens (Human).